The following is a 362-amino-acid chain: Phosphoserine aminotransferase (362 aa).

Arg-42 is an L-glutamate binding site. Residues Ala-76–Arg-77, Trp-102, Thr-153, Asp-174, and Gln-197 contribute to the pyridoxal 5'-phosphate site. Lys-198 is modified (N6-(pyridoxal phosphate)lysine). Residue Asn-239–Thr-240 participates in pyridoxal 5'-phosphate binding.

This sequence belongs to the class-V pyridoxal-phosphate-dependent aminotransferase family. SerC subfamily. As to quaternary structure, homodimer. The cofactor is pyridoxal 5'-phosphate.

The protein resides in the cytoplasm. The enzyme catalyses O-phospho-L-serine + 2-oxoglutarate = 3-phosphooxypyruvate + L-glutamate. It carries out the reaction 4-(phosphooxy)-L-threonine + 2-oxoglutarate = (R)-3-hydroxy-2-oxo-4-phosphooxybutanoate + L-glutamate. It functions in the pathway amino-acid biosynthesis; L-serine biosynthesis; L-serine from 3-phospho-D-glycerate: step 2/3. The protein operates within cofactor biosynthesis; pyridoxine 5'-phosphate biosynthesis; pyridoxine 5'-phosphate from D-erythrose 4-phosphate: step 3/5. Catalyzes the reversible conversion of 3-phosphohydroxypyruvate to phosphoserine and of 3-hydroxy-2-oxo-4-phosphonooxybutanoate to phosphohydroxythreonine. This is Phosphoserine aminotransferase from Proteus mirabilis (strain HI4320).